The sequence spans 76 residues: UPF0346 protein LBUL_1194 (76 aa).

This sequence belongs to the UPF0346 family.

This Lactobacillus delbrueckii subsp. bulgaricus (strain ATCC BAA-365 / Lb-18) protein is UPF0346 protein LBUL_1194.